A 470-amino-acid polypeptide reads, in one-letter code: UDP-N-acetylmuramate--L-alanine ligase (470 aa).

An ATP-binding site is contributed by 118-124 (GTHGKTT).

The protein belongs to the MurCDEF family.

It is found in the cytoplasm. It catalyses the reaction UDP-N-acetyl-alpha-D-muramate + L-alanine + ATP = UDP-N-acetyl-alpha-D-muramoyl-L-alanine + ADP + phosphate + H(+). It participates in cell wall biogenesis; peptidoglycan biosynthesis. Functionally, cell wall formation. The sequence is that of UDP-N-acetylmuramate--L-alanine ligase from Cereibacter sphaeroides (strain ATCC 17025 / ATH 2.4.3) (Rhodobacter sphaeroides).